A 292-amino-acid polypeptide reads, in one-letter code: Ribosomal protein L11 methyltransferase (292 aa).

S-adenosyl-L-methionine contacts are provided by Thr-144, Gly-165, Asp-187, and Asn-229.

Belongs to the methyltransferase superfamily. PrmA family.

The protein localises to the cytoplasm. It catalyses the reaction L-lysyl-[protein] + 3 S-adenosyl-L-methionine = N(6),N(6),N(6)-trimethyl-L-lysyl-[protein] + 3 S-adenosyl-L-homocysteine + 3 H(+). Functionally, methylates ribosomal protein L11. The polypeptide is Ribosomal protein L11 methyltransferase (Pseudomonas putida (strain ATCC 700007 / DSM 6899 / JCM 31910 / BCRC 17059 / LMG 24140 / F1)).